Consider the following 773-residue polypeptide: MRKFVFFVVAILIQIHTTTSQRNRSSSPSGFLDLQLEKCPQVLGCRCVRDSTRNIQCFSIDESKLLEIQKIYGSNIQRLELHNWQHDQLNFDIFAPFPQLEHIILRDGDLESLNGTVIHPTLKVLSIENSELTSSSEVCRLLSIFPKIQSLSLSKNYFEKFECDTSNTKLKILDLSQNRISHLEVPNTLRVLNVSRNRLTSFENISTKLTDLDISFNKLSLWPSFDDWKFPNLRSLSAIKLDLQTGFQLDAPLLNSLNIDGASLRYLNFHQILTPKLKKFSARYLTELRNIAGRLPSTVTDVAFTDTMLRTLPADFIPMSSTNHMQKVSFDFSTNQLLCDKCLLQWSLPVYAQTSIRKDCNLTREEIESASCKIGVVANDTGIQYGKYEKPTAISCFSYGVPSPKISWWRFRPAEKLGSYDPITDEISYTNVSETMKESYEIQSGGSLLIRSPNRSHVERYVCVVENEYGKDYGIYHFRLDYLDWYSYDVFNSVFWGGLATSLIVCLISFLLNITWILTRKSALWWIQRAERLSRVRKMVEAMEKYRVRQMESLHEKYTKRVQIVRDNYHQQVEALRVSYASQQEKFQNYKAAQVDAVHSHLDAMRDGYNNQLGRVREYGSKRAEQLWESYERQVNRMRTFSLQHRLKMMRQYKVKQRYVNKLLESLQATSPEVQLENEEKVRAALEIPDDLATIDGSMDTPSRLSRSSSFHSLPEYVIDEQGNVRPGIIPTNAPSIRFTTKPTTSSISNEASTSSPSSSGAHRSPDSPPEKR.

The signal sequence occupies residues 1–20 (MRKFVFFVVAILIQIHTTTS). Over 21–493 (QRNRSSSPSG…DWYSYDVFNS (473 aa)) the chain is Extracellular. LRR repeat units follow at residues 52 to 73 (TRNIQCFSIDESKLLEIQKIYG), 74 to 96 (SNIQRLELHNWQHDQLNFDIFAP), 97 to 120 (FPQLEHIILRDGDLESLNGTVIHP), 122 to 144 (LKVLSIENSELTSSSEVCRLLSI), 145 to 167 (FPKIQSLSLSKNYFEKFECDTSN), and 168 to 191 (TKLKILDLSQNRISHLEVPNTLRV). An N-linked (GlcNAc...) asparagine glycan is attached at Asn-114. Asn-204 carries N-linked (GlcNAc...) asparagine glycosylation. LRR repeat units follow at residues 206 to 230 (STKLTDLDISFNKLSLWPSFDDWKF), 233 to 251 (LRSLSAIKLDLQTGFQLDA), 252 to 275 (PLLNSLNIDGASLRYLNFHQILTP), and 296 to 319 (PSTVTDVAFTDTMLRTLPADFIPM). In terms of domain architecture, Ig-like spans 349–479 (PVYAQTSIRK…GKDYGIYHFR (131 aa)). 2 N-linked (GlcNAc...) asparagine glycosylation sites follow: Asn-361 and Asn-379. An intrachain disulfide couples Cys-396 to Cys-463. The helical transmembrane segment at 494–514 (VFWGGLATSLIVCLISFLLNI) threads the bilayer. Over 515-773 (TWILTRKSAL…RSPDSPPEKR (259 aa)) the chain is Cytoplasmic. Residues 725 to 773 (VRPGIIPTNAPSIRFTTKPTTSSISNEASTSSPSSSGAHRSPDSPPEKR) are disordered. Residues 733–745 (NAPSIRFTTKPTT) show a composition bias toward polar residues. Low complexity predominate over residues 746–763 (SSISNEASTSSPSSSGAH). The span at 764–773 (RSPDSPPEKR) shows a compositional bias: basic and acidic residues.

Its subcellular location is the membrane. The polypeptide is Immunoglobulin domain and leucine-rich repeat-containing protein 2 (Caenorhabditis elegans).